The chain runs to 356 residues: Tyrosine recombinase XerS (356 aa).

Residues 16–121 (IMPWFVLDYY…ALSSLYKYLT (106 aa)) form the Core-binding (CB) domain. Residues 169 to 354 (EFLDYVDCEY…VNDEQKNALD (186 aa)) form the Tyr recombinase domain. Active-site residues include arginine 210, lysine 234, histidine 306, arginine 309, and histidine 332. Catalysis depends on tyrosine 341, which acts as the O-(3'-phospho-DNA)-tyrosine intermediate.

Belongs to the 'phage' integrase family. XerS subfamily.

It is found in the cytoplasm. Its activity is regulated as follows. FtsK is required for recombination. Site-specific tyrosine recombinase, which acts by catalyzing the cutting and rejoining of the recombining DNA molecules. Essential to convert dimers of the bacterial chromosome into monomers to permit their segregation at cell division. This chain is Tyrosine recombinase XerS, found in Streptococcus uberis (strain ATCC BAA-854 / 0140J).